The primary structure comprises 181 residues: Acireductone dioxygenase (181 aa).

Fe(2+)-binding residues include His-100, His-102, Glu-106, and His-145. Residues His-100, His-102, Glu-106, and His-145 each coordinate Ni(2+).

This sequence belongs to the acireductone dioxygenase (ARD) family. In terms of assembly, monomer. It depends on Fe(2+) as a cofactor. Requires Ni(2+) as cofactor.

It carries out the reaction 1,2-dihydroxy-5-(methylsulfanyl)pent-1-en-3-one + O2 = 3-(methylsulfanyl)propanoate + CO + formate + 2 H(+). The enzyme catalyses 1,2-dihydroxy-5-(methylsulfanyl)pent-1-en-3-one + O2 = 4-methylsulfanyl-2-oxobutanoate + formate + 2 H(+). Its pathway is amino-acid biosynthesis; L-methionine biosynthesis via salvage pathway; L-methionine from S-methyl-5-thio-alpha-D-ribose 1-phosphate: step 5/6. Its function is as follows. Catalyzes 2 different reactions between oxygen and the acireductone 1,2-dihydroxy-3-keto-5-methylthiopentene (DHK-MTPene) depending upon the metal bound in the active site. Fe-containing acireductone dioxygenase (Fe-ARD) produces formate and 2-keto-4-methylthiobutyrate (KMTB), the alpha-ketoacid precursor of methionine in the methionine recycle pathway. Ni-containing acireductone dioxygenase (Ni-ARD) produces methylthiopropionate, carbon monoxide and formate, and does not lie on the methionine recycle pathway. The chain is Acireductone dioxygenase from Trichodesmium erythraeum (strain IMS101).